We begin with the raw amino-acid sequence, 93 residues long: Vacuolar ATPase assembly integral membrane protein VMA21 (93 aa).

Over 1-21 (MSNRVSTGKMAMAPQESVQPA) the chain is Cytoplasmic. Residues 22–42 (VLYKLVLFALLMAVVPIGTYF) traverse the membrane as a helical segment. At 43 to 54 (STLNYLWDGSTT) the chain is on the lumenal side. Residues 55–75 (FAAISAIAAANLILVGYVVVA) form a helical membrane-spanning segment. Residues 76-93 (FREDAASRTGPLPEKKTS) lie on the Cytoplasmic side of the membrane. Positions 90–93 (KKTS) match the Prevents secretion from ER motif.

This sequence belongs to the VMA21 family.

It localises to the endoplasmic reticulum membrane. The protein resides in the endoplasmic reticulum-Golgi intermediate compartment membrane. The protein localises to the cytoplasmic vesicle. Its subcellular location is the COPII-coated vesicle membrane. Its function is as follows. Required for the assembly of the V0 complex of the vacuolar ATPase (V-ATPase) in the endoplasmic reticulum. The protein is Vacuolar ATPase assembly integral membrane protein VMA21 of Cryptococcus neoformans var. neoformans serotype D (strain JEC21 / ATCC MYA-565) (Filobasidiella neoformans).